Here is a 232-residue protein sequence, read N- to C-terminus: Probable proteasome subunit alpha type-3 (232 aa).

Belongs to the peptidase T1A family. In terms of assembly, the 26S proteasome consists of a 20S proteasome core and two 19S regulatory subunits. The 20S proteasome core is composed of 28 subunits that are arranged in four stacked rings, resulting in a barrel-shaped structure. The two end rings are each formed by seven alpha subunits, and the two central rings are each formed by seven beta subunits. The catalytic chamber with the active sites is on the inside of the barrel.

It is found in the cytoplasm. The protein resides in the nucleus. In terms of biological role, the proteasome degrades poly-ubiquitinated proteins in the cytoplasm and in the nucleus. It is essential for the regulated turnover of proteins and for the removal of misfolded proteins. The proteasome is a multicatalytic proteinase complex that is characterized by its ability to cleave peptides with Arg, Phe, Tyr, Leu, and Glu adjacent to the leaving group at neutral or slightly basic pH. It has an ATP-dependent proteolytic activity. The polypeptide is Probable proteasome subunit alpha type-3 (PRE9) (Encephalitozoon cuniculi (strain GB-M1) (Microsporidian parasite)).